Here is an 862-residue protein sequence, read N- to C-terminus: Leucine--tRNA ligase (862 aa).

Residues 51-61 (PYPSGSLHMGH) carry the 'HIGH' region motif. The short motif at 624–628 (KMSKS) is the 'KMSKS' region element. Lysine 627 lines the ATP pocket.

The protein belongs to the class-I aminoacyl-tRNA synthetase family.

The protein localises to the cytoplasm. It carries out the reaction tRNA(Leu) + L-leucine + ATP = L-leucyl-tRNA(Leu) + AMP + diphosphate. The chain is Leucine--tRNA ligase from Prochlorococcus marinus (strain NATL1A).